A 152-amino-acid chain; its full sequence is Ribosome maturation factor RimP (152 aa).

This sequence belongs to the RimP family.

It localises to the cytoplasm. In terms of biological role, required for maturation of 30S ribosomal subunits. This chain is Ribosome maturation factor RimP, found in Paraburkholderia xenovorans (strain LB400).